We begin with the raw amino-acid sequence, 131 residues long: Protein TAP2 (131 aa).

The signal sequence occupies residues 1 to 22 (MAKSSPTYTVLFLLGLLALSTA). A disordered region spans residues 75–101 (ARSGGETDVKKMEGSMPDQGKTAGRDQ).

Tapetum of anthers.

In Antirrhinum majus (Garden snapdragon), this protein is Protein TAP2 (TAP2).